The chain runs to 218 residues: Octanoyltransferase (218 aa).

Residues 30-213 (GEIEDTLILV…YFSEVFNYDI (184 aa)) form the BPL/LPL catalytic domain. Residues 75–82 (RGGDVTYH), 143–145 (AIG), and 156–158 (GFA) each bind substrate. Catalysis depends on Cys174, which acts as the Acyl-thioester intermediate.

It belongs to the LipB family.

The protein resides in the cytoplasm. The enzyme catalyses octanoyl-[ACP] + L-lysyl-[protein] = N(6)-octanoyl-L-lysyl-[protein] + holo-[ACP] + H(+). Its pathway is protein modification; protein lipoylation via endogenous pathway; protein N(6)-(lipoyl)lysine from octanoyl-[acyl-carrier-protein]: step 1/2. Functionally, catalyzes the transfer of endogenously produced octanoic acid from octanoyl-acyl-carrier-protein onto the lipoyl domains of lipoate-dependent enzymes. Lipoyl-ACP can also act as a substrate although octanoyl-ACP is likely to be the physiological substrate. The sequence is that of Octanoyltransferase from Alkaliphilus metalliredigens (strain QYMF).